A 1188-amino-acid polypeptide reads, in one-letter code: Carboxylic acid reductase (1188 aa).

AMP contacts are provided by residues His-315, Ser-408, 429 to 430, Thr-434, Asp-507, 519 to 522, Lys-528, and Lys-629; these read DG and YVDR. Positions 665-743 constitute a Carrier domain; that stretch reads AGERPVIETV…SVAAHIEKER (79 aa). The residue at position 702 (Ser-702) is an O-(pantetheine 4'-phosphoryl)serine. NADP(+)-binding positions include 801-804, Arg-828, Arg-838, 868-869, 894-896, Ser-934, Tyr-970, Lys-974, and Ser-997; these read NGWL, DF, and SGA.

This sequence belongs to the ATP-dependent AMP-binding enzyme family. Carboxylic acid reductase subfamily. Pantetheine 4'-phosphate serves as cofactor.

It catalyses the reaction a carboxylate + ATP + NADPH + H(+) = an aldehyde + AMP + diphosphate + NADP(+). Its function is as follows. Catalyzes the ATP- and NADPH-dependent reduction of carboxylic acids to the corresponding aldehydes. Catalyzes the reduction of a very wide range of carboxylic acids, including benzoic acids, heterocyclic, phenylacetic, phenylpropanoic and fatty acid substrates. In Segniliparus rugosus (strain ATCC BAA-974 / DSM 45345 / CCUG 50838 / CIP 108380 / JCM 13579 / CDC 945), this protein is Carboxylic acid reductase.